We begin with the raw amino-acid sequence, 163 residues long: Periplasmic nitrate reductase, electron transfer subunit (163 aa).

The signal sequence occupies residues 1 to 32 (MRSQDPSRRLSRRLWTLFALALCLVTGTVALA). Heme c is bound by residues H76, C90, C93, H94, H111, C130, C133, and H134.

The protein belongs to the NapB family. As to quaternary structure, component of the periplasmic nitrate reductase NapAB complex composed of NapA and NapB. Post-translationally, binds 2 heme C groups per subunit.

The protein resides in the periplasm. Functionally, electron transfer subunit of the periplasmic nitrate reductase complex NapAB. Receives electrons from the membrane-anchored tetraheme c-type NapC protein and transfers these to NapA subunit, thus allowing electron flow between membrane and periplasm. Essential for periplasmic nitrate reduction with nitrate as the terminal electron acceptor. This is Periplasmic nitrate reductase, electron transfer subunit from Neorhizobium galegae (Rhizobium galegae).